The primary structure comprises 385 residues: 8-amino-7-oxononanoate synthase (385 aa).

Arginine 21 contacts substrate. 108-109 (GF) lines the pyridoxal 5'-phosphate pocket. A substrate-binding site is contributed by histidine 133. Residues serine 179, histidine 207, and threonine 233 each coordinate pyridoxal 5'-phosphate. Lysine 236 is modified (N6-(pyridoxal phosphate)lysine). Threonine 352 is a substrate binding site.

The protein belongs to the class-II pyridoxal-phosphate-dependent aminotransferase family. BioF subfamily. In terms of assembly, homodimer. Pyridoxal 5'-phosphate serves as cofactor.

The enzyme catalyses 6-carboxyhexanoyl-[ACP] + L-alanine + H(+) = (8S)-8-amino-7-oxononanoate + holo-[ACP] + CO2. It functions in the pathway cofactor biosynthesis; biotin biosynthesis. Its function is as follows. Catalyzes the decarboxylative condensation of pimeloyl-[acyl-carrier protein] and L-alanine to produce 8-amino-7-oxononanoate (AON), [acyl-carrier protein], and carbon dioxide. This is 8-amino-7-oxononanoate synthase from Salmonella typhimurium (strain LT2 / SGSC1412 / ATCC 700720).